We begin with the raw amino-acid sequence, 678 residues long: Glycine--tRNA ligase beta subunit (678 aa).

The protein belongs to the class-II aminoacyl-tRNA synthetase family. Tetramer of two alpha and two beta subunits.

It is found in the cytoplasm. It carries out the reaction tRNA(Gly) + glycine + ATP = glycyl-tRNA(Gly) + AMP + diphosphate. The polypeptide is Glycine--tRNA ligase beta subunit (Streptococcus pneumoniae (strain ATCC BAA-255 / R6)).